The primary structure comprises 462 residues: Chitinase-like mite allergen Der f 18.0101 (462 aa).

The signal sequence occupies residues 1–25 (MTRFSLTVLAVLAACFGSNIRPNVA). The GH18 domain occupies 29–378 (PKTVCYYESW…HAIQSNYYHG (350 aa)). C33 and C58 form a disulfide bridge. Residue N338 is glycosylated (N-linked (GlcNAc...) asparagine). The 59-residue stretch at 404-462 (VFHCHEEGFFRDKTYCATYYECKKGDFGLEKTVHHCANHLQAFDEVSRTCIDHTKIPGC) folds into the Chitin-binding type-2 domain. A disulfide bridge links C439 with C453.

This sequence belongs to the glycosyl hydrolase 18 family. Chitinase class II subfamily. As to expression, expressed in the upper digestive tract. Staining is observed in the ventriculus, and in very rare individuals, also in the intestine or esophagus. No expression in fecal pellets neither inside the rectum nor defecated outside of the body.

The protein localises to the secreted. In terms of biological role, probably a non-catalytic chitinase-like protein, which binds to insoluble chitin and enhances the activity of the catalytic chitinases. Has weak chitin-binding activity. This is Chitinase-like mite allergen Der f 18.0101 from Dermatophagoides farinae (American house dust mite).